Consider the following 458-residue polypeptide: Ammonium transporter Rh type B (458 aa).

Residues 1–13 (MAGSSRRAGGRRL) are Cytoplasmic-facing. Residues 14 to 34 (QLPLLCLLLQGATAILFAVFV) traverse the membrane as a helical segment. The Extracellular portion of the chain corresponds to 35 to 61 (RYNHETDAALWHWGNHSNPDNEFYFRY). An N-linked (GlcNAc...) asparagine glycan is attached at asparagine 49. The chain crosses the membrane as a helical span at residues 62–82 (PSFQDVHTMIFVGFGFLMAFL). Residues 83-86 (QRYG) lie on the Cytoplasmic side of the membrane. A helical transmembrane segment spans residues 87–107 (FSSVGFTFLLAAFALQWSTLV). Over 108–124 (QGFLHTFHGGHIHIGVE) the chain is Extracellular. Residues 125–145 (SMINADFCAGAVLISFGAILG) form a helical membrane-spanning segment. The Cytoplasmic portion of the chain corresponds to 146–149 (KTGP). The helical transmembrane segment at 150-170 (AQLLLMALLEVVLFGLNEFVL) threads the bilayer. Over 171 to 178 (LSLLGVKD) the chain is Extracellular. Residues 179-201 (AGGSMTIHTFGAYFGLVLSRVLY) form a helical membrane-spanning segment. Topologically, residues 202-219 (RPQLEKSKHRQSSVYHSD) are cytoplasmic. The chain crosses the membrane as a helical span at residues 220-240 (LFAMIGTIFLWIFWPSFNSAP). The Extracellular segment spans residues 241-251 (TPLGDGQHRTA). The chain crosses the membrane as a helical span at residues 252 to 272 (LNTYYSLTASTLSTFALSALV). Over 273–282 (GRDGRLDMVH) the chain is Cytoplasmic. Residues 283 to 303 (VQNAALAGGVVVGTSAEMMLT) traverse the membrane as a helical segment. Proline 304 is a topological domain (extracellular). Residues 305 to 325 (FGALAAGFLAGTVSTLGFKFF) form a helical membrane-spanning segment. Over 326-346 (TPILESKFKIQDTCGVHNLHG) the chain is Cytoplasmic. A helical transmembrane segment spans residues 347–367 (MPGVLGALLGVLVAGLATHDS). Residues 368–393 (YGEGLESVFPLIAEGQRSSTSQALHQ) lie on the Extracellular side of the membrane. The chain crosses the membrane as a helical span at residues 394 to 414 (LFGLFVTLIFASVGGGLGGLL). At 415 to 458 (LRLPFLDSPPDSQCYEDQIYWEVPEEHADLAQGSLRPEEPDTQA) the chain is on the cytoplasmic side. The interaction with ANK3 stretch occupies residues 416-424 (RLPFLDSPP). The short motif at 429–432 (YEDQ) is the Basolateral sorting signal element.

It belongs to the ammonium transporter (TC 2.A.49) family. Rh subfamily. In terms of assembly, interacts (via C-terminus) with ANK2 and ANK3; required for targeting to the basolateral membrane. In terms of processing, N-glycosylated.

The protein resides in the cell membrane. Its subcellular location is the basolateral cell membrane. The catalysed reaction is NH4(+)(in) = NH4(+)(out). The enzyme catalyses methylamine(out) = methylamine(in). It catalyses the reaction CO2(out) = CO2(in). Its function is as follows. Ammonium transporter involved in the maintenance of acid-base homeostasis. Transports ammonium and its related derivative methylammonium across the basolateral plasma membrane of epithelial cells likely contributing to renal transepithelial ammonia transport and ammonia metabolism. May transport either NH4(+) or NH3 ammonia species predominantly mediating an electrogenic NH4(+) transport. May act as a CO2 channel providing for renal acid secretion. The polypeptide is Ammonium transporter Rh type B (RHBG) (Sus scrofa (Pig)).